A 745-amino-acid polypeptide reads, in one-letter code: Ankyrin repeat and protein kinase domain-containing protein 1 (745 aa).

A Protein kinase domain is found at 34–301; it reads EEEWHLVASG…NVAVETDMLL (268 aa). ATP-binding positions include 40–48 and lysine 63; that span reads VASGGFSKV. The active-site Proton acceptor is aspartate 157. ANK repeat units follow at residues 369-398, 402-431, 435-464, 468-497, 501-530, 534-563, 567-596, 600-629, 633-662, 666-695, and 699-728; these read NRVT…DVDC, SGYT…DTNL, DGWA…LVNA, EGWT…DLSP, EGKT…ELDA, NLRT…LPDA, SGYS…SLEL, QGWT…DLDA, MQWT…NPNA, SGWT…DIHA, and VGWT…QVDV.

This sequence belongs to the protein kinase superfamily. TKL Ser/Thr protein kinase family.

The enzyme catalyses L-seryl-[protein] + ATP = O-phospho-L-seryl-[protein] + ADP + H(+). The catalysed reaction is L-threonyl-[protein] + ATP = O-phospho-L-threonyl-[protein] + ADP + H(+). This Mus musculus (Mouse) protein is Ankyrin repeat and protein kinase domain-containing protein 1 (Ankk1).